The sequence spans 200 residues: MSDANLLEASVRTEFGKGAARRTRRAGNVPAVLYGHQSEPQHLSLNAQAFAAILREHGTNAVLNLDIEGKKQLALTKSVVVHPIRRYIEHADLLIVKRGEKVTADVAVTVTGDAAPGTLVTQEATTISIEAEALNLPEAIEVSVEDAEIGTQITAGSIALPQGVTLASDPELLVVNVIAAPAAEPAPGEEAAEAEGESAE.

This sequence belongs to the bacterial ribosomal protein bL25 family. CTC subfamily. Part of the 50S ribosomal subunit; part of the 5S rRNA/L5/L18/L25 subcomplex. Contacts the 5S rRNA. Binds to the 5S rRNA independently of L5 and L18.

In terms of biological role, this is one of the proteins that binds to the 5S RNA in the ribosome where it forms part of the central protuberance. This is Large ribosomal subunit protein bL25 from Nocardia farcinica (strain IFM 10152).